The chain runs to 556 residues: Potassium-transporting ATPase potassium-binding subunit (556 aa).

10 helical membrane passes run 6-26 (AGILFALSLALALAAVHVPLG), 65-85 (SVLAFSAVSILFLFGLQLLQG), 133-153 (GLSVQNFVSAAVGMAVAMAFV), 176-196 (LRILLPLSIIGAIILVSGGVI), 249-269 (PTTWTNWVEIFLLSCIAFSLP), 283-303 (AAILAVMAVIATLSLSLMMLF), 378-398 (GLYSMLVLAVITVFVAGLMVG), 419-439 (YFLVTPLIVLIGTAVAMALPG), 483-503 (ALGLAMVFGRFLPIILVLALA), and 526-546 (FVGMVTGVTLILVALTFLPVL).

Belongs to the KdpA family. The system is composed of three essential subunits: KdpA, KdpB and KdpC.

The protein resides in the cell membrane. Its function is as follows. Part of the high-affinity ATP-driven potassium transport (or Kdp) system, which catalyzes the hydrolysis of ATP coupled with the electrogenic transport of potassium into the cytoplasm. This subunit binds the extracellular potassium ions and delivers the ions to the membrane domain of KdpB through an intramembrane tunnel. This is Potassium-transporting ATPase potassium-binding subunit from Mycobacterium sp. (strain KMS).